Here is a 619-residue protein sequence, read N- to C-terminus: Dihydroxy-acid dehydratase (619 aa).

Aspartate 81 serves as a coordination point for Mg(2+). Cysteine 122 contributes to the [2Fe-2S] cluster binding site. The Mg(2+) site is built by aspartate 123 and lysine 124. N6-carboxylysine is present on lysine 124. Residue cysteine 201 participates in [2Fe-2S] cluster binding. Residue glutamate 496 coordinates Mg(2+). Serine 522 functions as the Proton acceptor in the catalytic mechanism.

Belongs to the IlvD/Edd family. As to quaternary structure, homodimer. [2Fe-2S] cluster serves as cofactor. It depends on Mg(2+) as a cofactor.

It catalyses the reaction (2R)-2,3-dihydroxy-3-methylbutanoate = 3-methyl-2-oxobutanoate + H2O. It carries out the reaction (2R,3R)-2,3-dihydroxy-3-methylpentanoate = (S)-3-methyl-2-oxopentanoate + H2O. It functions in the pathway amino-acid biosynthesis; L-isoleucine biosynthesis; L-isoleucine from 2-oxobutanoate: step 3/4. Its pathway is amino-acid biosynthesis; L-valine biosynthesis; L-valine from pyruvate: step 3/4. Its function is as follows. Functions in the biosynthesis of branched-chain amino acids. Catalyzes the dehydration of (2R,3R)-2,3-dihydroxy-3-methylpentanoate (2,3-dihydroxy-3-methylvalerate) into 2-oxo-3-methylpentanoate (2-oxo-3-methylvalerate) and of (2R)-2,3-dihydroxy-3-methylbutanoate (2,3-dihydroxyisovalerate) into 2-oxo-3-methylbutanoate (2-oxoisovalerate), the penultimate precursor to L-isoleucine and L-valine, respectively. This is Dihydroxy-acid dehydratase from Paracidovorax citrulli (strain AAC00-1) (Acidovorax citrulli).